The sequence spans 271 residues: Ribonuclease HII (271 aa).

One can recognise an RNase H type-2 domain in the interval 84–271 (VLIAGVDEVG…HRMSFLSNYI (188 aa)). A divalent metal cation is bound by residues Asp90, Glu91, and Asp187.

This sequence belongs to the RNase HII family. Mn(2+) serves as cofactor. It depends on Mg(2+) as a cofactor.

The protein resides in the cytoplasm. The enzyme catalyses Endonucleolytic cleavage to 5'-phosphomonoester.. Its function is as follows. Endonuclease that specifically degrades the RNA of RNA-DNA hybrids. The sequence is that of Ribonuclease HII from Clostridium tetani (strain Massachusetts / E88).